Here is a 217-residue protein sequence, read N- to C-terminus: ATP-dependent Clp protease proteolytic subunit 1 (217 aa).

The tract at residues 1–24 is disordered; that stretch reads MTPLTTGWHPALSPRAEEGDTPPS. Ser-108 functions as the Nucleophile in the catalytic mechanism. His-133 is an active-site residue.

It belongs to the peptidase S14 family. Fourteen ClpP subunits assemble into 2 heptameric rings which stack back to back to give a disk-like structure with a central cavity, resembling the structure of eukaryotic proteasomes.

Its subcellular location is the cytoplasm. It carries out the reaction Hydrolysis of proteins to small peptides in the presence of ATP and magnesium. alpha-casein is the usual test substrate. In the absence of ATP, only oligopeptides shorter than five residues are hydrolyzed (such as succinyl-Leu-Tyr-|-NHMec, and Leu-Tyr-Leu-|-Tyr-Trp, in which cleavage of the -Tyr-|-Leu- and -Tyr-|-Trp bonds also occurs).. In terms of biological role, cleaves peptides in various proteins in a process that requires ATP hydrolysis. Has a chymotrypsin-like activity. Plays a major role in the degradation of misfolded proteins. The sequence is that of ATP-dependent Clp protease proteolytic subunit 1 from Streptomyces avermitilis (strain ATCC 31267 / DSM 46492 / JCM 5070 / NBRC 14893 / NCIMB 12804 / NRRL 8165 / MA-4680).